We begin with the raw amino-acid sequence, 435 residues long: RuBisCO large subunit-binding protein subunit beta-1 (435 aa).

Belongs to the chaperonin (HSP60) family. As to quaternary structure, oligomer of probably six alpha and six beta subunits.

The protein resides in the plastid. The protein localises to the chloroplast. Functionally, this protein binds RuBisCO small and large subunits and is implicated in the assembly of the enzyme oligomer. This is RuBisCO large subunit-binding protein subunit beta-1 from Chlamydomonas reinhardtii (Chlamydomonas smithii).